We begin with the raw amino-acid sequence, 168 residues long: Large ribosomal subunit protein bL17 (168 aa).

Residues 124 to 168 (QATGEAEAATKRAAKDAEGSAEVSEAKVDTTKADDEAAAEESKDA) form a disordered region. A compositionally biased stretch (basic and acidic residues) spans 131 to 168 (AATKRAAKDAEGSAEVSEAKVDTTKADDEAAAEESKDA).

This sequence belongs to the bacterial ribosomal protein bL17 family. As to quaternary structure, part of the 50S ribosomal subunit. Contacts protein L32.

The polypeptide is Large ribosomal subunit protein bL17 (Streptomyces coelicolor (strain ATCC BAA-471 / A3(2) / M145)).